The chain runs to 592 residues: Anaphase-promoting complex subunit 8 (592 aa).

TPR repeat units lie at residues 66–99, 160–193, 291–324, 359–392, 393–426, 428–460, 461–494, and 496–528; these read EYYK…QLPI, QQQQ…NKKD, TYIL…EPNR, PETC…NDRY, LSAW…NPRD, RAWY…RPYD, PRMW…YDRE, and VAIN…CDQE. A disordered region spans residues 129–166; the sequence is QQQAQQQAQQAQQESQQNDKNNDTNNNNKTDQQQQQQQ.

The protein belongs to the APC8/CDC23 family. As to quaternary structure, the APC/C is composed of at least 13 subunits that stay tightly associated throughout the cell cycle: anapc1, anapc2, anapc3, anapc4, anapc5, anapc6, anapc7, anapc8, anapc10, anapc11, cdc20, cdc26 and cdh1.

The protein resides in the nucleus. It functions in the pathway protein modification; protein ubiquitination. Component of the anaphase promoting complex/cyclosome (APC/C), a cell cycle-regulated E3 ubiquitin-protein ligase complex that controls progression through mitosis and the G1 phase of the cell cycle. The protein is Anaphase-promoting complex subunit 8 (anapc8) of Dictyostelium discoideum (Social amoeba).